Here is a 432-residue protein sequence, read N- to C-terminus: Carbohydrate esterase MZ0003 (432 aa).

A signal peptide spans 1–25 (MQRTCVLIVLIVTSTMWTPDPDVYA). Residues 266 to 271 (GHSRLG) carry the GXSYXG catalytic site motif motif. Ser-268 (nucleophile) is an active-site residue. Residues Lys-272 and Trp-359 each contribute to the substrate site. His-409 serves as the catalytic Charge relay system.

It belongs to the carbohydrate esterase 15 (CE15) family. Requires Does not require metal ions for activity. as cofactor.

It localises to the periplasm. Is inhibited by PMSF and by NaF in vitro, which is consistent with the catalytic nucleophile being a serine. Functionally, displays some glucuronoyl esterase activity in vitro, since it is able to hydrolyze methyl 4-O-methyl-D-glucopyranosyluronate, allyl D-glucuronate, benzyl D-glucuronate and D-glucuronic acid methyl ester. However, esters of glucuronic acid are probably not its biological substrate, as they are not present in the marine environment. Can also hydrolyze a range of other esters, including p-nitrophenyl acetate. More likely biologically-relevant substrates for MZ0003 and other marine bacterial CE15s are algal cell wall polysaccharides, as these would be readily available in this environment and could be used as energy sources. The chain is Carbohydrate esterase MZ0003 from Unknown prokaryotic organism.